The primary structure comprises 210 residues: MWEPYMPVEPGLGREENFLSLEDLLMSQEKLPCCIESGFPRLGFLDKGGDSDSIPEGSKMELPLWLAKGLYDNKRRVLSVELPKIYREGWRTVFSADANVVDLHKMGPHYYGFGSQLLNFDSPENPEIAKTILQTFVGRFRRIMDSSQNAYNEDTSGLVARLDELERSLFRAGQRGLNAFQSWERGKAAQITASNLVQNYKKRKFNEADA.

Belongs to the GINS3/PSF3 family. As to quaternary structure, component of the GINS complex which is a heterotetramer of gins1/psf1, gins2/psf2, gins3/psf3 and gins4/sld5. Component of the CMG helicase complex, composed of the mcm2-7 complex, the GINS complex and cdc45.

The protein resides in the nucleus. It is found in the chromosome. In terms of biological role, required for correct functioning of the GINS complex, a complex that plays an essential role in the initiation of DNA replication, and progression of DNA replication forks. GINS complex is a core component of CDC45-MCM-GINS (CMG) helicase, the molecular machine that unwinds template DNA during replication, and around which the replisome is built. The protein is DNA replication complex GINS protein PSF3 of Xenopus laevis (African clawed frog).